The chain runs to 696 residues: Macrolide export ATP-binding/permease protein MacB (696 aa).

Positions 6-244 constitute an ABC transporter domain; that stretch reads IELKNIERYH…KPQNKRTFID (239 aa). 42–49 lines the ATP pocket; it reads GASGSGKS. The interval 254–287 is disordered; sequence HNTEKLNRPNEKNNIDNDNKENNNGYNRNDNSFL. The span at 255–274 shows a compositional bias: basic and acidic residues; it reads NTEKLNRPNEKNNIDNDNKE. Over residues 275-284 the composition is skewed to low complexity; that stretch reads NNNGYNRNDN. The next 4 membrane-spanning stretches (helical) occupy residues 324–344, 576–596, 626–646, and 659–679; these read FLTM…IALG, IAFI…LVSV, MVSL…GGLF, and LSSF…FGYF.

The protein belongs to the ABC transporter superfamily. Macrolide exporter (TC 3.A.1.122) family. As to quaternary structure, homodimer. Part of the tripartite efflux system MacAB-TolC, which is composed of an inner membrane transporter, MacB, a periplasmic membrane fusion protein, MacA, and an outer membrane component, TolC. The complex forms a large protein conduit and can translocate molecules across both the inner and outer membranes. Interacts with MacA.

The protein localises to the cell inner membrane. In terms of biological role, part of the tripartite efflux system MacAB-TolC. MacB is a non-canonical ABC transporter that contains transmembrane domains (TMD), which form a pore in the inner membrane, and an ATP-binding domain (NBD), which is responsible for energy generation. Confers resistance against macrolides. The sequence is that of Macrolide export ATP-binding/permease protein MacB from Haemophilus ducreyi (strain 35000HP / ATCC 700724).